The chain runs to 64 residues: Large ribosomal subunit protein bL32 (64 aa).

The interval 1–64 (MAVQQNRKTR…APKHGDETEE (64 aa)) is disordered. A compositionally biased stretch (basic residues) spans 7–16 (RKTRSKRGMR).

Belongs to the bacterial ribosomal protein bL32 family.

This chain is Large ribosomal subunit protein bL32, found in Methylococcus capsulatus (strain ATCC 33009 / NCIMB 11132 / Bath).